Here is a 233-residue protein sequence, read N- to C-terminus: Large ribosomal subunit protein uL22m (233 aa).

It belongs to the universal ribosomal protein uL22 family. Component of the mitochondrial ribosome large subunit (39S) which comprises a 16S rRNA and about 50 distinct proteins.

It localises to the mitochondrion. This is Large ribosomal subunit protein uL22m (mRpL22) from Drosophila melanogaster (Fruit fly).